We begin with the raw amino-acid sequence, 314 residues long: tRNA pseudouridine synthase B (314 aa).

Position 43 (His-43) interacts with substrate. Asp-48 functions as the Nucleophile in the catalytic mechanism. Substrate contacts are provided by Tyr-76, Tyr-179, and Leu-200.

Belongs to the pseudouridine synthase TruB family. Type 1 subfamily.

The catalysed reaction is uridine(55) in tRNA = pseudouridine(55) in tRNA. In terms of biological role, responsible for synthesis of pseudouridine from uracil-55 in the psi GC loop of transfer RNAs. The sequence is that of tRNA pseudouridine synthase B from Salmonella arizonae (strain ATCC BAA-731 / CDC346-86 / RSK2980).